A 204-amino-acid polypeptide reads, in one-letter code: Nicotine blue oxidoreductase (204 aa).

Homotetramer. FMN serves as cofactor.

It carries out the reaction 3,3'-bipyridine-2,2',5,5',6,6'-hexol + NADP(+) = (E)-2,2',5,5'-tetrahydroxy-6H,6'H-(3,3'-bipyridinylidene)-6,6'-dione + NADPH + 3 H(+). The catalysed reaction is 3,3'-bipyridine-2,2',5,5',6,6'-hexol + NAD(+) = (E)-2,2',5,5'-tetrahydroxy-6H,6'H-(3,3'-bipyridinylidene)-6,6'-dione + NADH + 3 H(+). It functions in the pathway alkaloid degradation; nicotine degradation. Catalyzes the reduction of nicotine blue to its hydroquinone form. Nicotine blue is the name given to the compound formed by the autocatalytic condensation of two molecules of 2,3,6-trihydroxypyridine, an intermediate in the nicotine degradation pathway. May play a role in preventing the intracellular formation of nicotine blue semiquinone radicals, which by redox cycling would lead to the formation of toxic reactive oxygen species. Besides nicotine blue, several other quinones are reduced by nboR. The polypeptide is Nicotine blue oxidoreductase (nboR) (Paenarthrobacter nicotinovorans (Arthrobacter nicotinovorans)).